The sequence spans 719 residues: Calpain-12 (719 aa).

The Calpain catalytic domain occupies 45 to 341; sequence LFRDPYFPAG…FDTVQICSLS (297 aa). Catalysis depends on residues cysteine 105, histidine 259, and asparagine 283. Residues 342-540 are domain III; it reads PEVLGPSPEG…DDVISADLQS (199 aa). Over residues 393–402 the composition is skewed to acidic residues; that stretch reads DEEDDEDEEG. Residues 393–418 are disordered; the sequence is DEEDDEDEEGPWGGWGAAGARGPARG. The segment at 541–719 is domain IV; the sequence is LQGPYLPLEL…RQWMEVATFS (179 aa). An EF-hand domain is found at 620–655; sequence GYLLEWQAIFNKFDEDTSGTMNSYELRLALNAAGFH. Residues aspartate 633, aspartate 635, serine 637, threonine 639, and glutamate 644 each contribute to the Ca(2+) site.

This sequence belongs to the peptidase C2 family.

Its function is as follows. Calcium-regulated non-lysosomal thiol-protease. In Homo sapiens (Human), this protein is Calpain-12 (CAPN12).